Reading from the N-terminus, the 809-residue chain is Ubiquitin carboxyl-terminal hydrolase 1 (809 aa).

Residues 101–738 form the USP domain; the sequence is AGLVNDGNTC…GVFMLFYEYD (638 aa). Cysteine 110 functions as the Nucleophile in the catalytic mechanism. The segment at 143–195 is disordered; the sequence is NEHNEEGNGQESAQDEATHKKNTRKGGKVYGKHKKKLNRKSSSKEDEEKSQEP. A compositionally biased stretch (basic residues) spans 162-183; it reads KKNTRKGGKVYGKHKKKLNRKS. Basic and acidic residues predominate over residues 184–194; the sequence is SSKEDEEKSQE. 3 positions are modified to phosphoserine: serine 530, serine 531, and serine 555. The tract at residues 569–596 is disordered; it reads ASHYNHTKDISNYDPLNGEVDGVTSDDE. 2 positions are modified to phosphoserine: serine 618 and serine 638. Threonine 652 bears the Phosphothreonine mark. Phosphoserine is present on residues serine 653, serine 654, and serine 670. Histidine 697 serves as the catalytic Proton acceptor. A disordered region spans residues 750 to 809; the sequence is LEAIQSNNEEDDEKEQEQKGVQEPKESQEQGEGEEQEEGQEQMKFERTEDHRDISGKDVN. Residue serine 755 is modified to Phosphoserine. Positions 765–777 are enriched in basic and acidic residues; that stretch reads QEQKGVQEPKESQ. Residues 778–789 are compositionally biased toward acidic residues; sequence EQGEGEEQEEGQ. Basic and acidic residues predominate over residues 790–809; that stretch reads EQMKFERTEDHRDISGKDVN.

It belongs to the peptidase C19 family.

The enzyme catalyses Thiol-dependent hydrolysis of ester, thioester, amide, peptide and isopeptide bonds formed by the C-terminal Gly of ubiquitin (a 76-residue protein attached to proteins as an intracellular targeting signal).. Its function is as follows. Has an ATP-independent isopeptidase activity, cleaving at the C-terminus of the ubiquitin moiety in natural or engineered linear fusion proteins, irrespective of their size or the presence of an N-terminal extension to ubiquitin. This chain is Ubiquitin carboxyl-terminal hydrolase 1 (UBP1), found in Saccharomyces cerevisiae (strain ATCC 204508 / S288c) (Baker's yeast).